The following is a 316-amino-acid chain: Methionyl-tRNA formyltransferase (316 aa).

112-115 (SLLP) contributes to the (6S)-5,6,7,8-tetrahydrofolate binding site.

It belongs to the Fmt family.

It carries out the reaction L-methionyl-tRNA(fMet) + (6R)-10-formyltetrahydrofolate = N-formyl-L-methionyl-tRNA(fMet) + (6S)-5,6,7,8-tetrahydrofolate + H(+). Its function is as follows. Attaches a formyl group to the free amino group of methionyl-tRNA(fMet). The formyl group appears to play a dual role in the initiator identity of N-formylmethionyl-tRNA by promoting its recognition by IF2 and preventing the misappropriation of this tRNA by the elongation apparatus. This chain is Methionyl-tRNA formyltransferase, found in Actinobacillus pleuropneumoniae serotype 5b (strain L20).